The following is a 114-amino-acid chain: Putative protein TfaS (114 aa).

Belongs to the tfa family.

The polypeptide is Putative protein TfaS (tfaS) (Escherichia coli (strain K12)).